Reading from the N-terminus, the 435-residue chain is tRNA(Ile)-lysidine synthase (435 aa).

25 to 30 (SGGLDS) is an ATP binding site.

It belongs to the tRNA(Ile)-lysidine synthase family.

It localises to the cytoplasm. The catalysed reaction is cytidine(34) in tRNA(Ile2) + L-lysine + ATP = lysidine(34) in tRNA(Ile2) + AMP + diphosphate + H(+). In terms of biological role, ligates lysine onto the cytidine present at position 34 of the AUA codon-specific tRNA(Ile) that contains the anticodon CAU, in an ATP-dependent manner. Cytidine is converted to lysidine, thus changing the amino acid specificity of the tRNA from methionine to isoleucine. The sequence is that of tRNA(Ile)-lysidine synthase from Photobacterium profundum (strain SS9).